The primary structure comprises 205 residues: High frequency lysogenization protein HflD homolog (205 aa).

Belongs to the HflD family.

The protein resides in the cytoplasm. Its subcellular location is the cell inner membrane. The sequence is that of High frequency lysogenization protein HflD homolog from Alkalilimnicola ehrlichii (strain ATCC BAA-1101 / DSM 17681 / MLHE-1).